The following is a 244-amino-acid chain: MDKTTHFGYKTVAESEKAGKVAEVFHSVASKYDVMNDLMSGGLHRVWKHFTLTTSGVRAGDKVLDIAGGTGDLSRGWAKRVGKTGEVWLTDINSSMLTVGRDRLLDEGVILPVSLADAEKLPFPDNYFDAVSVAFGLRNMTHKDAALKEMCRVLKPGGKLFVLEFSKVWKPLSPFYDFYSFKALPIMGKLVANDADSYQYLAESIRMHPDQETLKQMMLDAGFGKVDYHNLTGGVVALHKGVKF.

Residues Thr70, Asp91, and 117 to 118 each bind S-adenosyl-L-methionine; that span reads DA.

This sequence belongs to the class I-like SAM-binding methyltransferase superfamily. MenG/UbiE family.

It carries out the reaction a 2-demethylmenaquinol + S-adenosyl-L-methionine = a menaquinol + S-adenosyl-L-homocysteine + H(+). It catalyses the reaction a 2-methoxy-6-(all-trans-polyprenyl)benzene-1,4-diol + S-adenosyl-L-methionine = a 5-methoxy-2-methyl-3-(all-trans-polyprenyl)benzene-1,4-diol + S-adenosyl-L-homocysteine + H(+). Its pathway is quinol/quinone metabolism; menaquinone biosynthesis; menaquinol from 1,4-dihydroxy-2-naphthoate: step 2/2. It functions in the pathway cofactor biosynthesis; ubiquinone biosynthesis. Methyltransferase required for the conversion of demethylmenaquinol (DMKH2) to menaquinol (MKH2) and the conversion of 2-polyprenyl-6-methoxy-1,4-benzoquinol (DDMQH2) to 2-polyprenyl-3-methyl-6-methoxy-1,4-benzoquinol (DMQH2). The polypeptide is Ubiquinone/menaquinone biosynthesis C-methyltransferase UbiE (Chromobacterium violaceum (strain ATCC 12472 / DSM 30191 / JCM 1249 / CCUG 213 / NBRC 12614 / NCIMB 9131 / NCTC 9757 / MK)).